Consider the following 203-residue polypeptide: Ras-related protein RABG3b (203 aa).

Gly-15–Thr-22 lines the GTP pocket. An Effector region motif is present at residues Tyr-37–Phe-45. GTP-binding positions include Asp-63 to Gln-67, Asn-125 to Asp-128, and Ser-158 to Ala-159. S-geranylgeranyl cysteine attachment occurs at residues Cys-201 and Cys-203. Cys-203 carries the post-translational modification Cysteine methyl ester.

Belongs to the small GTPase superfamily. Rab family. In terms of assembly, interacts with VPS39. Expressed in xylem cells of inflorescence stems.

Its subcellular location is the cell membrane. Its function is as follows. Intracellular vesicle trafficking and protein transport. Functions in autophagy. Involved in xylem and tracheary element differentiation. The protein is Ras-related protein RABG3b (RABG3B) of Arabidopsis thaliana (Mouse-ear cress).